A 102-amino-acid polypeptide reads, in one-letter code: Small ribosomal subunit protein uS10 (102 aa).

This sequence belongs to the universal ribosomal protein uS10 family. In terms of assembly, part of the 30S ribosomal subunit.

Its function is as follows. Involved in the binding of tRNA to the ribosomes. The protein is Small ribosomal subunit protein uS10 of Staphylococcus saprophyticus subsp. saprophyticus (strain ATCC 15305 / DSM 20229 / NCIMB 8711 / NCTC 7292 / S-41).